We begin with the raw amino-acid sequence, 154 residues long: Endoribonuclease YbeY (154 aa).

Histidine 113, histidine 117, and histidine 123 together coordinate Zn(2+).

It belongs to the endoribonuclease YbeY family. Zn(2+) is required as a cofactor.

The protein resides in the cytoplasm. Functionally, single strand-specific metallo-endoribonuclease involved in late-stage 70S ribosome quality control and in maturation of the 3' terminus of the 16S rRNA. The chain is Endoribonuclease YbeY from Anaplasma marginale (strain Florida).